A 337-amino-acid polypeptide reads, in one-letter code: Anthranilate phosphoribosyltransferase (337 aa).

5-phospho-alpha-D-ribose 1-diphosphate contacts are provided by residues G81, 84–85 (GD), S89, 91–94 (NVST), 109–117 (KHGNRAASS), and A121. An anthranilate-binding site is contributed by G81. Position 93 (S93) interacts with Mg(2+). N112 is a binding site for anthranilate. An anthranilate-binding site is contributed by R167. The Mg(2+) site is built by D226 and E227.

It belongs to the anthranilate phosphoribosyltransferase family. Homodimer. The cofactor is Mg(2+).

It carries out the reaction N-(5-phospho-beta-D-ribosyl)anthranilate + diphosphate = 5-phospho-alpha-D-ribose 1-diphosphate + anthranilate. The protein operates within amino-acid biosynthesis; L-tryptophan biosynthesis; L-tryptophan from chorismate: step 2/5. Its function is as follows. Catalyzes the transfer of the phosphoribosyl group of 5-phosphorylribose-1-pyrophosphate (PRPP) to anthranilate to yield N-(5'-phosphoribosyl)-anthranilate (PRA). This is Anthranilate phosphoribosyltransferase from Methylobacterium nodulans (strain LMG 21967 / CNCM I-2342 / ORS 2060).